We begin with the raw amino-acid sequence, 962 residues long: Glycine dehydrogenase (decarboxylating) (962 aa).

At Lys-709 the chain carries N6-(pyridoxal phosphate)lysine.

This sequence belongs to the GcvP family. In terms of assembly, the glycine cleavage system is composed of four proteins: P, T, L and H. Requires pyridoxal 5'-phosphate as cofactor.

It carries out the reaction N(6)-[(R)-lipoyl]-L-lysyl-[glycine-cleavage complex H protein] + glycine + H(+) = N(6)-[(R)-S(8)-aminomethyldihydrolipoyl]-L-lysyl-[glycine-cleavage complex H protein] + CO2. Functionally, the glycine cleavage system catalyzes the degradation of glycine. The P protein binds the alpha-amino group of glycine through its pyridoxal phosphate cofactor; CO(2) is released and the remaining methylamine moiety is then transferred to the lipoamide cofactor of the H protein. In Shewanella baltica (strain OS223), this protein is Glycine dehydrogenase (decarboxylating).